Consider the following 692-residue polypeptide: Elongation factor G 1 (692 aa).

The region spanning 8–283 (EKTRNIGIMA…SVVEYLPSPV (276 aa)) is the tr-type G domain. GTP-binding positions include 17–24 (AHIDAGKT), 81–85 (DTPGH), and 135–138 (NKMD).

Belongs to the TRAFAC class translation factor GTPase superfamily. Classic translation factor GTPase family. EF-G/EF-2 subfamily.

The protein resides in the cytoplasm. Catalyzes the GTP-dependent ribosomal translocation step during translation elongation. During this step, the ribosome changes from the pre-translocational (PRE) to the post-translocational (POST) state as the newly formed A-site-bound peptidyl-tRNA and P-site-bound deacylated tRNA move to the P and E sites, respectively. Catalyzes the coordinated movement of the two tRNA molecules, the mRNA and conformational changes in the ribosome. The polypeptide is Elongation factor G 1 (Geobacter metallireducens (strain ATCC 53774 / DSM 7210 / GS-15)).